The primary structure comprises 194 residues: Peptidyl-tRNA hydrolase (194 aa).

TRNA is bound at residue tyrosine 17. Histidine 22 (proton acceptor) is an active-site residue. Tyrosine 68, asparagine 70, and asparagine 116 together coordinate tRNA.

Belongs to the PTH family. As to quaternary structure, monomer.

It localises to the cytoplasm. It carries out the reaction an N-acyl-L-alpha-aminoacyl-tRNA + H2O = an N-acyl-L-amino acid + a tRNA + H(+). Its function is as follows. Hydrolyzes ribosome-free peptidyl-tRNAs (with 1 or more amino acids incorporated), which drop off the ribosome during protein synthesis, or as a result of ribosome stalling. Catalyzes the release of premature peptidyl moieties from peptidyl-tRNA molecules trapped in stalled 50S ribosomal subunits, and thus maintains levels of free tRNAs and 50S ribosomes. The chain is Peptidyl-tRNA hydrolase from Pseudomonas syringae pv. syringae (strain B728a).